The following is a 506-amino-acid chain: Vinckepain-1 (506 aa).

Over 1-32 the chain is Cytoplasmic; sequence MSDNIGQINFTIPGIQSLDENDTYLKINHKKT. Positions 1–262 are cleaved as a propeptide — activation peptide; the sequence is MSDNIGQINF…LISVDNKSKD (262 aa). The chain crosses the membrane as a helical; Signal-anchor for type II membrane protein span at residues 33-53; sequence IKICAYAITAIALFFIGGVFF. At 54 to 506 the chain is on the lumenal side; the sequence is KNQAKINALD…VGSDVFFPIY (453 aa). N-linked (GlcNAc...) asparagine glycans are attached at residues N133 and N258. 4 disulfide bridges follow: C284–C326, C319–C359, C344–C364, and C413–C495. The active site involves C287. N-linked (GlcNAc...) asparagine glycosylation occurs at N418. Residues H419 and N470 contribute to the active site.

The protein belongs to the peptidase C1 family.

The protein localises to the membrane. Its function is as follows. Cysteine protease. The polypeptide is Vinckepain-1 (Plasmodium vinckei).